A 412-amino-acid chain; its full sequence is GTPase Obg (412 aa).

One can recognise an Obg domain in the interval 1-159; the sequence is MKFLDQAKIF…RWIWLRLKMI (159 aa). Positions 160–327 constitute an OBG-type G domain; the sequence is ADAGLVGLPN…ILARLFTHIR (168 aa). Residues 166–173, 191–195, 212–215, 279–282, and 308–310 contribute to the GTP site; these read GLPNAGKS, FTTLH, DIPG, NKCD, and SGV. Ser-173 and Thr-193 together coordinate Mg(2+). Residues 335 to 412 are disordered; the sequence is AVPAASPIFG…ADDEEDDAEE (78 aa). Positions 385–412 are enriched in acidic residues; that stretch reads NDGDEVDEDYDDEDLEEVADDEEDDAEE.

Belongs to the TRAFAC class OBG-HflX-like GTPase superfamily. OBG GTPase family. As to quaternary structure, monomer. The cofactor is Mg(2+).

Its subcellular location is the cytoplasm. Functionally, an essential GTPase which binds GTP, GDP and possibly (p)ppGpp with moderate affinity, with high nucleotide exchange rates and a fairly low GTP hydrolysis rate. Plays a role in control of the cell cycle, stress response, ribosome biogenesis and in those bacteria that undergo differentiation, in morphogenesis control. The chain is GTPase Obg from Paramagnetospirillum magneticum (strain ATCC 700264 / AMB-1) (Magnetospirillum magneticum).